The sequence spans 294 residues: Proteasome subunit beta (294 aa).

Residues M1 to G65 constitute a propeptide, removed in mature form; by autocatalysis. The active-site Nucleophile is T66.

It belongs to the peptidase T1B family. The 20S proteasome core is composed of 14 alpha and 14 beta subunits that assemble into four stacked heptameric rings, resulting in a barrel-shaped structure. The two inner rings, each composed of seven catalytic beta subunits, are sandwiched by two outer rings, each composed of seven alpha subunits. The catalytic chamber with the active sites is on the inside of the barrel. Has a gated structure, the ends of the cylinder being occluded by the N-termini of the alpha-subunits. Is capped by the proteasome-associated ATPase, ARC.

It is found in the cytoplasm. The catalysed reaction is Cleavage of peptide bonds with very broad specificity.. It participates in protein degradation; proteasomal Pup-dependent pathway. With respect to regulation, the formation of the proteasomal ATPase ARC-20S proteasome complex, likely via the docking of the C-termini of ARC into the intersubunit pockets in the alpha-rings, may trigger opening of the gate for substrate entry. Interconversion between the open-gate and close-gate conformations leads to a dynamic regulation of the 20S proteasome proteolysis activity. In terms of biological role, component of the proteasome core, a large protease complex with broad specificity involved in protein degradation. In Rhodococcus jostii (strain RHA1), this protein is Proteasome subunit beta.